The sequence spans 141 residues: Hemoglobin subunit alpha (141 aa).

Residues 1 to 141 (VLSPGDKSNI…VSTVLTSKYR (141 aa)) form the Globin domain. Ser-3 is subject to Phosphoserine. Residues Lys-7 and Lys-11 each carry the N6-succinyllysine modification. Lys-16 is subject to N6-acetyllysine; alternate. Lys-16 is subject to N6-succinyllysine; alternate. Tyr-24 is subject to Phosphotyrosine. At Ser-35 the chain carries Phosphoserine. N6-succinyllysine is present on Lys-40. A Phosphoserine modification is found at Ser-49. Position 58 (His-58) interacts with O2. Heme b is bound at residue His-87. Ser-102 carries the phosphoserine modification. Position 108 is a phosphothreonine (Thr-108). Ser-124 carries the post-translational modification Phosphoserine. Thr-134 and Thr-137 each carry phosphothreonine. Phosphoserine is present on Ser-138.

Belongs to the globin family. In terms of assembly, heterotetramer of two alpha chains and two beta chains. In terms of tissue distribution, red blood cells.

Involved in oxygen transport from the lung to the various peripheral tissues. In terms of biological role, hemopressin acts as an antagonist peptide of the cannabinoid receptor CNR1. Hemopressin-binding efficiently blocks cannabinoid receptor CNR1 and subsequent signaling. The chain is Hemoglobin subunit alpha (HBA) from Tupaia glis (Common tree shrew).